The following is a 123-amino-acid chain: Pre-B lymphocyte protein 3 (123 aa).

Positions 1-20 (MACRCLSFLLMGTFLSVSQT) are cleaved as a signal peptide. The Ig-like domain maps to 21–123 (VLAQLDALLV…YCSVGYGFSP (103 aa)). Residues cysteine 40 and cysteine 115 are joined by a disulfide bond.

It belongs to the immunoglobulin superfamily. As to expression, expressed in B-cell precursors. Expressed in fetal liver, bone marrow, spleen and lymph node.

Its function is as follows. Associates with the Ig-mu chain to form a molecular complex that is expressed on the surface of pre-B-cells. In Homo sapiens (Human), this protein is Pre-B lymphocyte protein 3 (VPREB3).